Reading from the N-terminus, the 813-residue chain is Leucine--tRNA ligase (813 aa).

A 'HIGH' region motif is present at residues 40–51; it reads SYPSGSKLHAGH. The short motif at 572–576 is the 'KMSKS' region element; sequence KMSKS. Position 575 (Lys-575) interacts with ATP.

The protein belongs to the class-I aminoacyl-tRNA synthetase family.

It is found in the cytoplasm. The catalysed reaction is tRNA(Leu) + L-leucine + ATP = L-leucyl-tRNA(Leu) + AMP + diphosphate. The polypeptide is Leucine--tRNA ligase (Clostridium botulinum (strain Langeland / NCTC 10281 / Type F)).